The following is a 280-amino-acid chain: Vitamin B12-binding protein (280 aa).

A signal peptide spans 1-27 (MMPLGLFPLPRAAAVLLISLLTLPAQA). The 248-residue stretch at 30–277 (RVISLSPSTT…QMASIPTPVA (248 aa)) folds into the Fe/B12 periplasmic-binding domain. Residue tyrosine 57 participates in cyanocob(III)alamin binding. Cysteine 190 and cysteine 266 are disulfide-bonded.

The protein belongs to the BtuF family. The complex is composed of two ATP-binding proteins (BtuD), two transmembrane proteins (BtuC) and a solute-binding protein (BtuF).

It is found in the periplasm. Part of the ABC transporter complex BtuCDF involved in vitamin B12 import. Binds vitamin B12 and delivers it to the periplasmic surface of BtuC. This is Vitamin B12-binding protein from Yersinia pseudotuberculosis serotype O:3 (strain YPIII).